Consider the following 501-residue polypeptide: ATP synthase subunit alpha (501 aa).

Residue 169 to 176 (GDRQTGKT) coordinates ATP.

Belongs to the ATPase alpha/beta chains family. In terms of assembly, F-type ATPases have 2 components, CF(1) - the catalytic core - and CF(0) - the membrane proton channel. CF(1) has five subunits: alpha(3), beta(3), gamma(1), delta(1), epsilon(1). CF(0) has three main subunits: a(1), b(2) and c(9-12). The alpha and beta chains form an alternating ring which encloses part of the gamma chain. CF(1) is attached to CF(0) by a central stalk formed by the gamma and epsilon chains, while a peripheral stalk is formed by the delta and b chains.

It is found in the cell membrane. The enzyme catalyses ATP + H2O + 4 H(+)(in) = ADP + phosphate + 5 H(+)(out). Functionally, produces ATP from ADP in the presence of a proton gradient across the membrane. The alpha chain is a regulatory subunit. This Streptococcus pneumoniae (strain Hungary19A-6) protein is ATP synthase subunit alpha.